The sequence spans 225 residues: NAD(P)H-quinone oxidoreductase subunit K, chloroplastic (225 aa).

Positions 43, 44, 108, and 139 each coordinate [4Fe-4S] cluster.

The protein belongs to the complex I 20 kDa subunit family. As to quaternary structure, NDH is composed of at least 16 different subunits, 5 of which are encoded in the nucleus. Requires [4Fe-4S] cluster as cofactor.

The protein localises to the plastid. Its subcellular location is the chloroplast thylakoid membrane. The catalysed reaction is a plastoquinone + NADH + (n+1) H(+)(in) = a plastoquinol + NAD(+) + n H(+)(out). It carries out the reaction a plastoquinone + NADPH + (n+1) H(+)(in) = a plastoquinol + NADP(+) + n H(+)(out). NDH shuttles electrons from NAD(P)H:plastoquinone, via FMN and iron-sulfur (Fe-S) centers, to quinones in the photosynthetic chain and possibly in a chloroplast respiratory chain. The immediate electron acceptor for the enzyme in this species is believed to be plastoquinone. Couples the redox reaction to proton translocation, and thus conserves the redox energy in a proton gradient. The sequence is that of NAD(P)H-quinone oxidoreductase subunit K, chloroplastic from Gossypium barbadense (Sea Island cotton).